The chain runs to 159 residues: NADH-quinone oxidoreductase subunit B 2 (159 aa).

4 residues coordinate [4Fe-4S] cluster: cysteine 37, cysteine 38, cysteine 102, and cysteine 132.

This sequence belongs to the complex I 20 kDa subunit family. NDH-1 is composed of 14 different subunits. Subunits NuoB, C, D, E, F, and G constitute the peripheral sector of the complex. It depends on [4Fe-4S] cluster as a cofactor.

It is found in the cell inner membrane. It catalyses the reaction a quinone + NADH + 5 H(+)(in) = a quinol + NAD(+) + 4 H(+)(out). NDH-1 shuttles electrons from NADH, via FMN and iron-sulfur (Fe-S) centers, to quinones in the respiratory chain. Couples the redox reaction to proton translocation (for every two electrons transferred, four hydrogen ions are translocated across the cytoplasmic membrane), and thus conserves the redox energy in a proton gradient. In Azoarcus sp. (strain BH72), this protein is NADH-quinone oxidoreductase subunit B 2.